The sequence spans 117 residues: Ribosome-binding factor A (117 aa).

This sequence belongs to the RbfA family. As to quaternary structure, monomer. Binds 30S ribosomal subunits, but not 50S ribosomal subunits or 70S ribosomes.

It is found in the cytoplasm. Functionally, one of several proteins that assist in the late maturation steps of the functional core of the 30S ribosomal subunit. Associates with free 30S ribosomal subunits (but not with 30S subunits that are part of 70S ribosomes or polysomes). Required for efficient processing of 16S rRNA. May interact with the 5'-terminal helix region of 16S rRNA. This is Ribosome-binding factor A from Leptospira interrogans serogroup Icterohaemorrhagiae serovar Lai (strain 56601).